Consider the following 548-residue polypeptide: DNA ligase (548 aa).

E244 contacts ATP. K246 acts as the N6-AMP-lysine intermediate in catalysis. ATP is bound by residues R251, R266, E295, F334, R405, and K411.

This sequence belongs to the ATP-dependent DNA ligase family. Mg(2+) serves as cofactor.

It catalyses the reaction ATP + (deoxyribonucleotide)n-3'-hydroxyl + 5'-phospho-(deoxyribonucleotide)m = (deoxyribonucleotide)n+m + AMP + diphosphate.. In terms of biological role, DNA ligase that seals nicks in double-stranded DNA during DNA replication, DNA recombination and DNA repair. The sequence is that of DNA ligase from Methanoculleus marisnigri (strain ATCC 35101 / DSM 1498 / JR1).